The sequence spans 189 residues: Molybdenum cofactor guanylyltransferase (189 aa).

Residues 10–12 (LAG), Lys23, Asn51, Asp69, and Asp99 each bind GTP. Asp99 lines the Mg(2+) pocket.

The protein belongs to the MobA family. In terms of assembly, monomer. It depends on Mg(2+) as a cofactor.

It localises to the cytoplasm. The catalysed reaction is Mo-molybdopterin + GTP + H(+) = Mo-molybdopterin guanine dinucleotide + diphosphate. In terms of biological role, transfers a GMP moiety from GTP to Mo-molybdopterin (Mo-MPT) cofactor (Moco or molybdenum cofactor) to form Mo-molybdopterin guanine dinucleotide (Mo-MGD) cofactor. In Pasteurella multocida (strain Pm70), this protein is Molybdenum cofactor guanylyltransferase.